The chain runs to 138 residues: uncharacterized protein (138 aa).

This is an uncharacterized protein from Bacillus subtilis (strain 168).